The sequence spans 156 residues: AP-1 complex subunit sigma-1 (156 aa).

This sequence belongs to the adaptor complexes small subunit family. In terms of assembly, adapter protein complex 1 (AP-1) is a heterotetramer composed of two large adaptins (gamma-type subunit APL4 and beta-type subunit APL2), a medium adaptin (mu-type subunit APM1) and a small adaptin (sigma-type subunit APS1). AP-1 interacts with clathrin. Also a component of the AP-1R complex composed of at least APM2, APL4 and APS1.

The protein localises to the cytoplasm. The protein resides in the nucleus. It localises to the cytoplasmic vesicle. It is found in the clathrin-coated vesicle membrane. Its subcellular location is the endosome. The protein localises to the golgi apparatus. Its function is as follows. Component of the adapter complexes which link clathrin to receptors in coated vesicles. Clathrin-associated protein complexes are believed to interact with the cytoplasmic tails of membrane proteins, leading to their selection and concentration. AP19 is probably a subunit of the Golgi membrane adapter. Component of the AP-1-related (AP-1R) complex, an adapter protein complex that mediates sorting of cargo SNARE SNC1. In contrast to the APM1-containing AP-1 complex, AP-1R is incapable of sorting CHS3. The protein is AP-1 complex subunit sigma-1 (APS1) of Saccharomyces cerevisiae (strain ATCC 204508 / S288c) (Baker's yeast).